Here is a 369-residue protein sequence, read N- to C-terminus: tRNA/tmRNA (uracil-C(5))-methyltransferase (369 aa).

The S-adenosyl-L-methionine site is built by Q190, Y218, N223, E239, and D301. C326 (nucleophile) is an active-site residue. Residue E360 is the Proton acceptor of the active site.

Belongs to the class I-like SAM-binding methyltransferase superfamily. RNA M5U methyltransferase family. TrmA subfamily.

It catalyses the reaction uridine(54) in tRNA + S-adenosyl-L-methionine = 5-methyluridine(54) in tRNA + S-adenosyl-L-homocysteine + H(+). The enzyme catalyses uridine(341) in tmRNA + S-adenosyl-L-methionine = 5-methyluridine(341) in tmRNA + S-adenosyl-L-homocysteine + H(+). In terms of biological role, dual-specificity methyltransferase that catalyzes the formation of 5-methyluridine at position 54 (m5U54) in all tRNAs, and that of position 341 (m5U341) in tmRNA (transfer-mRNA). The protein is tRNA/tmRNA (uracil-C(5))-methyltransferase of Vibrio vulnificus (strain CMCP6).